The following is a 50-amino-acid chain: Fungus-induced-related protein 15 (50 aa).

A signal peptide spans 1–21 (MNFYSLFVFIALIFSFNVVHG).

Functionally, may have role in hypoxia response. The protein is Fungus-induced-related protein 15 (fipr-15) of Caenorhabditis elegans.